The chain runs to 101 residues: Small ribosomal subunit protein uS14 (101 aa).

The span at 1–11 (MAKKSAIETNE) shows a compositional bias: basic and acidic residues. The tract at residues 1–20 (MAKKSAIETNERRRKLATGH) is disordered.

It belongs to the universal ribosomal protein uS14 family. In terms of assembly, part of the 30S ribosomal subunit. Contacts proteins S3 and S10.

In terms of biological role, binds 16S rRNA, required for the assembly of 30S particles and may also be responsible for determining the conformation of the 16S rRNA at the A site. The polypeptide is Small ribosomal subunit protein uS14 (Xanthobacter autotrophicus (strain ATCC BAA-1158 / Py2)).